A 212-amino-acid polypeptide reads, in one-letter code: Large ribosomal subunit protein uL3 (212 aa).

Position 153 is an N5-methylglutamine (glutamine 153).

It belongs to the universal ribosomal protein uL3 family. As to quaternary structure, part of the 50S ribosomal subunit. Forms a cluster with proteins L14 and L19. In terms of processing, methylated by PrmB.

One of the primary rRNA binding proteins, it binds directly near the 3'-end of the 23S rRNA, where it nucleates assembly of the 50S subunit. This Marinobacter nauticus (strain ATCC 700491 / DSM 11845 / VT8) (Marinobacter aquaeolei) protein is Large ribosomal subunit protein uL3.